Here is a 510-residue protein sequence, read N- to C-terminus: Bifunctional pantoate ligase/cytidylate kinase (510 aa).

The interval 1-276 (MKKVIIRKTE…CGETRLIDHV (276 aa)) is pantoate--beta-alanine ligase. Residue 29–36 (MGNLHNGH) coordinates ATP. His36 (proton donor) is an active-site residue. Gln61 provides a ligand contact to (R)-pantoate. Gln61 contacts beta-alanine. 150–153 (GEKD) lines the ATP pocket. Gln156 provides a ligand contact to (R)-pantoate. An ATP-binding site is contributed by 187-190 (LSSR). Residues 277 to 510 (FLMKRSPIIA…DKIPKETQIR (234 aa)) are cytidylate kinase.

The protein in the N-terminal section; belongs to the pantothenate synthetase family. This sequence in the C-terminal section; belongs to the cytidylate kinase family. Type 1 subfamily.

It is found in the cytoplasm. The enzyme catalyses (R)-pantoate + beta-alanine + ATP = (R)-pantothenate + AMP + diphosphate + H(+). It catalyses the reaction CMP + ATP = CDP + ADP. The catalysed reaction is dCMP + ATP = dCDP + ADP. It participates in cofactor biosynthesis; (R)-pantothenate biosynthesis; (R)-pantothenate from (R)-pantoate and beta-alanine: step 1/1. Its function is as follows. Catalyzes the condensation of pantoate with beta-alanine in an ATP-dependent reaction via a pantoyl-adenylate intermediate. Catalyzes the transfer of a phosphate group from ATP to either CMP or dCMP to form CDP or dCDP and ADP, respectively. The polypeptide is Bifunctional pantoate ligase/cytidylate kinase (Prochlorococcus marinus (strain MIT 9312)).